Here is a 228-residue protein sequence, read N- to C-terminus: Uracil-DNA glycosylase (228 aa).

The active-site Proton acceptor is the aspartate 64.

This sequence belongs to the uracil-DNA glycosylase (UDG) superfamily. UNG family.

The protein resides in the cytoplasm. It catalyses the reaction Hydrolyzes single-stranded DNA or mismatched double-stranded DNA and polynucleotides, releasing free uracil.. In terms of biological role, excises uracil residues from the DNA which can arise as a result of misincorporation of dUMP residues by DNA polymerase or due to deamination of cytosine. In Pectobacterium atrosepticum (strain SCRI 1043 / ATCC BAA-672) (Erwinia carotovora subsp. atroseptica), this protein is Uracil-DNA glycosylase.